A 68-amino-acid polypeptide reads, in one-letter code: uncharacterized protein (68 aa).

This is an uncharacterized protein from Bacillus subtilis (strain 168).